The sequence spans 95 residues: Aspartyl/glutamyl-tRNA(Asn/Gln) amidotransferase subunit C (95 aa).

It belongs to the GatC family. Heterotrimer of A, B and C subunits.

The enzyme catalyses L-glutamyl-tRNA(Gln) + L-glutamine + ATP + H2O = L-glutaminyl-tRNA(Gln) + L-glutamate + ADP + phosphate + H(+). It catalyses the reaction L-aspartyl-tRNA(Asn) + L-glutamine + ATP + H2O = L-asparaginyl-tRNA(Asn) + L-glutamate + ADP + phosphate + 2 H(+). Functionally, allows the formation of correctly charged Asn-tRNA(Asn) or Gln-tRNA(Gln) through the transamidation of misacylated Asp-tRNA(Asn) or Glu-tRNA(Gln) in organisms which lack either or both of asparaginyl-tRNA or glutaminyl-tRNA synthetases. The reaction takes place in the presence of glutamine and ATP through an activated phospho-Asp-tRNA(Asn) or phospho-Glu-tRNA(Gln). This chain is Aspartyl/glutamyl-tRNA(Asn/Gln) amidotransferase subunit C, found in Campylobacter lari (strain RM2100 / D67 / ATCC BAA-1060).